We begin with the raw amino-acid sequence, 394 residues long: L-lactate 2-monooxygenase (394 aa).

An FMN hydroxy acid dehydrogenase domain is found at 19-394 (VAPTLPMSYA…LTIDALRPTR (376 aa)). Tyr-45 contributes to the a 2-oxocarboxylate binding site. FMN is bound by residues 98–100 (PIG), Ser-129, and Gln-151. Tyr-153 contacts a 2-oxocarboxylate. Thr-179 serves as a coordination point for FMN. Position 188 (Arg-188) interacts with a 2-oxocarboxylate. FMN is bound at residue Lys-267. His-291 functions as the Proton acceptor in the catalytic mechanism. An a 2-oxocarboxylate-binding site is contributed by Arg-294. FMN contacts are provided by residues 321–325 (DSGIR) and Arg-345.

The protein belongs to the FMN-dependent alpha-hydroxy acid dehydrogenase family. Homotetramer. It depends on FMN as a cofactor.

The catalysed reaction is (S)-lactate + O2 = acetate + CO2 + H2O. Its function is as follows. Catalyzes the oxidative decarboxylation of (S)-lactate (L-lactate) to acetate and carbon dioxide. Its physiological role remains unknown. This chain is L-lactate 2-monooxygenase, found in Mycolicibacterium smegmatis (Mycobacterium smegmatis).